A 496-amino-acid polypeptide reads, in one-letter code: Glycine receptor subunit beta (496 aa).

The first 22 residues, 1 to 22 (MKFSLAVSFFILMSLLFEDACS), serve as a signal peptide directing secretion. Residues 23–268 (KEKSSKKGKG…IFTLRRQVGF (246 aa)) lie on the Extracellular side of the membrane. N-linked (GlcNAc...) asparagine glycosylation is present at Asn-54. 2 residues coordinate glycine: Arg-108 and Ser-174. Cys-183 and Cys-197 form a disulfide bridge. N-linked (GlcNAc...) asparagine glycosylation is present at Asn-242. An intrachain disulfide couples Cys-243 to Cys-255. Thr-250 contacts glycine. The chain crosses the membrane as a helical span at residues 269-289 (YMMGVYAPTLLIVVLSWLSFW). Residues 290 to 294 (INPDA) lie on the Cytoplasmic side of the membrane. Residues 295–315 (SAARVPLGIFSVLSLASECTT) traverse the membrane as a helical segment. At 316 to 327 (LAAELPKVSYVK) the chain is on the extracellular side. A helical transmembrane segment spans residues 328-349 (ALDVWLIACLLFGFASLVEYAV). Topologically, residues 350–471 (VQVMLNNPKR…KPVIPTAAKR (122 aa)) are cytoplasmic. Thr-391 is modified (phosphothreonine). A helical transmembrane segment spans residues 472–495 (IDLYARALFPFCFLFFNVIYWSIY). Residue Leu-496 is a topological domain, extracellular.

This sequence belongs to the ligand-gated ion channel (TC 1.A.9) family. Glycine receptor (TC 1.A.9.3) subfamily. GLRB sub-subfamily. Forms heteropentamers with glycin receptor alpha subunits. Heteropentamers with GLRA1 can be composed of two GLRA1 and three GLRB subunits, or three GLRA1 and two GLRB subunits, or four GLRA1 subunits and one GLRB subunit. Forms heteropentamers with GLRA2. Functional GLRB-GLRA2 heteropentamers contain four GLRA2 subunits and one GLRB subunit, although alternative subunit composition cannot be excluded. Forms a heteropentamer with GLRA3. Interacts with GPHN. As to expression, detected in spinal cord and brain stem (at protein level). Detected in spinal cord, cerebellum and brain cortex.

It is found in the postsynaptic cell membrane. The protein resides in the cell membrane. Its subcellular location is the synapse. It localises to the perikaryon. The protein localises to the cell projection. It is found in the dendrite. The protein resides in the cytoplasm. The catalysed reaction is chloride(in) = chloride(out). Channel opening is triggered by extracellular glycine. Heteropentameric channels composed of GLRB and GLRA1 are activated by lower glycine levels than homopentameric GLRA1. In terms of biological role, subunit of heteromeric glycine-gated chloride channels. Plays an important role in the down-regulation of neuronal excitability. Contributes to the generation of inhibitory postsynaptic currents. This chain is Glycine receptor subunit beta (Glrb), found in Rattus norvegicus (Rat).